The chain runs to 272 residues: MTDMHSLLVAAILGIVEGLTEFLPVSSTGHMIIVGHLLGFEGDTAKTFEVVIQLGSILAVVVMFWRRLFGLIGIHFGHPPHEGVGKGRLSLIHILLGMVPAVVLGLVFHDFIKSLFNPINVMYALVVGGVLLIIAEVLKPKEPKAPGLDDMTYRQAFFIGCFQCLALWPGFSRSGATISGGMLVGVSRYAASEFSFLLAVPMMMGATALDLYKSMGFLTMADLPMFAVGFVTAFVVALVAIKTFLHIIKRISFIPFAIYRFIVAAAVFAVFM.

8 helical membrane passes run 6 to 26, 45 to 65, 89 to 109, 115 to 135, 156 to 176, 189 to 209, 221 to 241, and 251 to 271; these read SLLVAAILGIVEGLTEFLPVS, AKTFEVVIQLGSILAVVVMFW, LSLIHILLGMVPAVVLGLVFH, LFNPINVMYALVVGGVLLIIA, AFFIGCFQCLALWPGFSRSGA, YAASEFSFLLAVPMMMGATAL, ADLPMFAVGFVTAFVVALVAI, and ISFIPFAIYRFIVAAAVFAVF.

The protein belongs to the UppP family.

It is found in the cell inner membrane. The catalysed reaction is di-trans,octa-cis-undecaprenyl diphosphate + H2O = di-trans,octa-cis-undecaprenyl phosphate + phosphate + H(+). Functionally, catalyzes the dephosphorylation of undecaprenyl diphosphate (UPP). Confers resistance to bacitracin. In Cronobacter sakazakii (strain ATCC BAA-894) (Enterobacter sakazakii), this protein is Undecaprenyl-diphosphatase.